The primary structure comprises 227 residues: Cytochrome c oxidase subunit 2 (227 aa).

The Mitochondrial intermembrane portion of the chain corresponds to 1–14 (MAYPLQMGLQDATS). Residues 15 to 45 (PIMEELLHFHDHTLMIVFLISSLVLYIISLM) traverse the membrane as a helical segment. Topologically, residues 46–59 (LTTKLTHTSTMDAQ) are mitochondrial matrix. A helical membrane pass occupies residues 60-87 (EVETVWTILPAIILILIALPSLRILYMM). Residues 88–227 (DEINNPSLTV…HFEKWSTSML (140 aa)) are Mitochondrial intermembrane-facing. Cu cation-binding residues include His-161, Cys-196, Glu-198, Cys-200, His-204, and Met-207. Glu-198 contacts Mg(2+).

It belongs to the cytochrome c oxidase subunit 2 family. In terms of assembly, component of the cytochrome c oxidase (complex IV, CIV), a multisubunit enzyme composed of 14 subunits. The complex is composed of a catalytic core of 3 subunits MT-CO1, MT-CO2 and MT-CO3, encoded in the mitochondrial DNA, and 11 supernumerary subunits COX4I, COX5A, COX5B, COX6A, COX6B, COX6C, COX7A, COX7B, COX7C, COX8 and NDUFA4, which are encoded in the nuclear genome. The complex exists as a monomer or a dimer and forms supercomplexes (SCs) in the inner mitochondrial membrane with NADH-ubiquinone oxidoreductase (complex I, CI) and ubiquinol-cytochrome c oxidoreductase (cytochrome b-c1 complex, complex III, CIII), resulting in different assemblies (supercomplex SCI(1)III(2)IV(1) and megacomplex MCI(2)III(2)IV(2)). Found in a complex with TMEM177, COA6, COX18, COX20, SCO1 and SCO2. Interacts with TMEM177 in a COX20-dependent manner. Interacts with COX20. Interacts with COX16. The cofactor is Cu cation.

It is found in the mitochondrion inner membrane. It carries out the reaction 4 Fe(II)-[cytochrome c] + O2 + 8 H(+)(in) = 4 Fe(III)-[cytochrome c] + 2 H2O + 4 H(+)(out). In terms of biological role, component of the cytochrome c oxidase, the last enzyme in the mitochondrial electron transport chain which drives oxidative phosphorylation. The respiratory chain contains 3 multisubunit complexes succinate dehydrogenase (complex II, CII), ubiquinol-cytochrome c oxidoreductase (cytochrome b-c1 complex, complex III, CIII) and cytochrome c oxidase (complex IV, CIV), that cooperate to transfer electrons derived from NADH and succinate to molecular oxygen, creating an electrochemical gradient over the inner membrane that drives transmembrane transport and the ATP synthase. Cytochrome c oxidase is the component of the respiratory chain that catalyzes the reduction of oxygen to water. Electrons originating from reduced cytochrome c in the intermembrane space (IMS) are transferred via the dinuclear copper A center (CU(A)) of subunit 2 and heme A of subunit 1 to the active site in subunit 1, a binuclear center (BNC) formed by heme A3 and copper B (CU(B)). The BNC reduces molecular oxygen to 2 water molecules using 4 electrons from cytochrome c in the IMS and 4 protons from the mitochondrial matrix. This is Cytochrome c oxidase subunit 2 (MT-CO2) from Phoca vitulina (Harbor seal).